The chain runs to 269 residues: Protein tio (269 aa).

Basic and acidic residues predominate over residues 1-12 (MANEPQEHEEGK). Positions 1-127 (MANEPQEHEE…NETKCPDEQN (127 aa)) are disordered. The Cytoplasmic portion of the chain corresponds to 1–246 (MANEPQEHEE…VEKKLTCVIC (246 aa)). The span at 27–41 (PNIPQDPTPGTPPGP) shows a compositional bias: pro residues. Low complexity predominate over residues 61-74 (SEGPPDGSGNSSPP). Polar residues-rich tracts occupy residues 91-101 (SESGGNNSAPN) and 114-127 (AGNGNETKCPDEQN). Phosphotyrosine; by host LCK is present on tyrosine 136. The interval 158–167 (EEERSPFNKY) is CSKH/LBD2. The tract at residues 186–195 (IPPPQLPPRP) is SH3B/LBD1. A helical membrane pass occupies residues 247 to 267 (LLIGILVLLILLFMLGFLFLL). The Extracellular segment spans residues 268-269 (MK).

Homodimer. Binds SH3 domain of host LYN, HCK, LCK, SRC, FYN or YES. When tyrosine-phosphorylated, binds to the SH2 domain of host LCK, SRC, or FYN. Post-translationally, phosphorylated by host LCK, SRC and less efficiently by FYN.

The protein resides in the host cell membrane. Its function is as follows. Transforms host T-cells, inducing T-cell lymphomia in the host. Activates at least SRC and LCK tyrosines kinases, thereby activating signaling pathway transforming host T-cells. Human T-cells transformed ex vivo display a IL2 indenpendent growth phenotype. The protein is Protein tio of Ateles (AtHV-3).